A 183-amino-acid polypeptide reads, in one-letter code: MSKNEKLSAEEKALFRGLMSGTRQLSQDTIVHKPPRKKFNQVPVKRLLSEQMDASHYFSDEFQPLLASEGAVRYVRSDVSHYELKKLRRGDFTPEIFLDLHGLTQKQAKQELGALIAACRREHIFCASVMHGHGKHILKQQTPLWLAQHPWVMAFHQAPKLFGGDAALLVLIEVEEWLPPELP.

Positions 98–173 (LDLHGLTQKQ…GDAALLVLIE (76 aa)) constitute a Smr domain.

The protein belongs to the SmrB family. Associates with collided ribosomes, but not with correctly translating polysomes.

In terms of biological role, acts as a ribosome collision sensor. Detects stalled/collided disomes (pairs of ribosomes where the leading ribosome is stalled and a second ribosome has collided with it) and endonucleolytically cleaves mRNA at the 5' boundary of the stalled ribosome. Stalled/collided disomes form a new interface (primarily via the 30S subunits) that binds SmrB. Cleaved mRNA becomes available for tmRNA ligation, leading to ribosomal subunit dissociation and rescue of stalled ribosomes. The sequence is that of Ribosome rescue factor SmrB from Erwinia tasmaniensis (strain DSM 17950 / CFBP 7177 / CIP 109463 / NCPPB 4357 / Et1/99).